A 1243-amino-acid chain; its full sequence is Inositol hexakisphosphate and diphosphoinositol-pentakisphosphate kinase 2 (1243 aa).

Ser38 carries the post-translational modification Phosphoserine. 53 to 54 (KK) is a binding site for substrate. Arg134, Lys187, His194, and Arg213 together coordinate ATP. Substrate is bound at residue 213-214 (RK). Residue Ser223 is modified to Phosphoserine. ATP is bound by residues 237–240 (EEFM) and 246–248 (DVK). Substrate-binding residues include Lys248 and Arg262. ATP is bound by residues Ser264, Asp309, and 321 to 323 (DVN). 326–329 (SFVK) is a substrate binding site. Residues 371–442 (PTTSGTMMEL…VLDIARQLLM (72 aa)) form a polyphosphoinositide-binding domain region. Disordered stretches follow at residues 898–941 (KGCE…RDEV) and 957–1016 (HIHR…SPVS). A compositionally biased stretch (basic and acidic residues) spans 915–941 (ASRENEGRRPFKIDNDDEPHTSKRDEV). The segment covering 958–969 (IHRKSPLPRSRK) has biased composition (basic residues). Phosphoserine is present on residues Ser1006, Ser1016, Ser1074, Ser1091, Ser1165, Ser1172, and Ser1180. A disordered region spans residues 1185–1243 (TPAKILPTPPATLKSTKASSKPATSGPSSAVVPNTSSRKKNITSKTETHEHKKNTGKKK). Low complexity predominate over residues 1195 to 1209 (ATLKSTKASSKPATS). Residues 1210–1220 (GPSSAVVPNTS) are compositionally biased toward polar residues. 2 positions are modified to phosphoserine: Ser1220 and Ser1221.

The protein belongs to the histidine acid phosphatase family. VIP1 subfamily.

The protein localises to the cytoplasm. The protein resides in the cytosol. The catalysed reaction is 1D-myo-inositol hexakisphosphate + ATP = 1-diphospho-1D-myo-inositol 2,3,4,5,6-pentakisphosphate + ADP. It carries out the reaction 5-diphospho-1D-myo-inositol 1,2,3,4,6-pentakisphosphate + ATP + H(+) = 1,5-bis(diphospho)-1D-myo-inositol 2,3,4,6-tetrakisphosphate + ADP. Functionally, bifunctional inositol kinase that acts in concert with the IP6K kinases IP6K1, IP6K2 and IP6K3 to synthesize the diphosphate group-containing inositol pyrophosphates diphosphoinositol pentakisphosphate, PP-InsP5, and bis-diphosphoinositol tetrakisphosphate, (PP)2-InsP4. PP-InsP5 and (PP)2-InsP4, also respectively called InsP7 and InsP8, regulate a variety of cellular processes, including apoptosis, vesicle trafficking, cytoskeletal dynamics, exocytosis, insulin signaling and neutrophil activation. Phosphorylates inositol hexakisphosphate (InsP6) at position 1 to produce PP-InsP5 which is in turn phosphorylated by IP6Ks to produce (PP)2-InsP4. Alternatively, phosphorylates PP-InsP5 at position 1, produced by IP6Ks from InsP6, to produce (PP)2-InsP4. Required for normal hearing. The protein is Inositol hexakisphosphate and diphosphoinositol-pentakisphosphate kinase 2 of Homo sapiens (Human).